The following is a 95-amino-acid chain: Small integral membrane protein 26 (95 aa).

A helical transmembrane segment spans residues 13 to 35; that stretch reads MSVVYGIGTWSVLGSLLYYSRTM.

The protein belongs to the SMIM26 family. Interacts with AGK and SLC25A11. Detected in kidney (at protein level).

It is found in the mitochondrion outer membrane. Its function is as follows. May play a role in cell viability. The protein is Small integral membrane protein 26 of Homo sapiens (Human).